Reading from the N-terminus, the 425-residue chain is 26S proteasome regulatory subunit 7 (425 aa).

208–215 (GPPGTGKT) contacts ATP.

This sequence belongs to the AAA ATPase family.

The protein localises to the cytoplasm. The protein resides in the nucleus. Functionally, the 26S proteasome is involved in the ATP-dependent degradation of ubiquitinated proteins. The regulatory (or ATPase) complex confers ATP dependency and substrate specificity to the 26S complex. The polypeptide is 26S proteasome regulatory subunit 7 (RPT1) (Prunus persica (Peach)).